Consider the following 139-residue polypeptide: Small ribosomal subunit protein bS6 (139 aa).

A compositionally biased stretch (basic and acidic residues) spans 114–133 (KKEPREPRAPREPRVEKVDE). A disordered region spans residues 114-139 (KKEPREPRAPREPRVEKVDEQTFTEE).

This sequence belongs to the bacterial ribosomal protein bS6 family.

Functionally, binds together with bS18 to 16S ribosomal RNA. This chain is Small ribosomal subunit protein bS6, found in Campylobacter concisus (strain 13826).